We begin with the raw amino-acid sequence, 95 residues long: Co-chaperonin GroES (95 aa).

The protein belongs to the GroES chaperonin family. As to quaternary structure, heptamer of 7 subunits arranged in a ring. Interacts with the chaperonin GroEL.

It is found in the cytoplasm. Its function is as follows. Together with the chaperonin GroEL, plays an essential role in assisting protein folding. The GroEL-GroES system forms a nano-cage that allows encapsulation of the non-native substrate proteins and provides a physical environment optimized to promote and accelerate protein folding. GroES binds to the apical surface of the GroEL ring, thereby capping the opening of the GroEL channel. The chain is Co-chaperonin GroES from Maricaulis maris (strain MCS10) (Caulobacter maris).